Consider the following 262-residue polypeptide: Cytochrome c oxidase subunit 3 (262 aa).

7 helical membrane passes run 16-36 (PWPY…VVYF), 39-59 (SQTW…IVWW), 83-103 (GMLL…WAFF), 128-148 (FSVP…VTWA), 160-180 (AING…LQAM), 198-218 (FFVA…FLAV), and 241-261 (WYWH…YWWG).

Belongs to the cytochrome c oxidase subunit 3 family. Component of the cytochrome c oxidase (complex IV, CIV), a multisubunit enzyme composed of a catalytic core of 3 subunits and several supernumerary subunits. The complex exists as a monomer or a dimer and forms supercomplexes (SCs) in the inner mitochondrial membrane with ubiquinol-cytochrome c oxidoreductase (cytochrome b-c1 complex, complex III, CIII).

The protein resides in the mitochondrion inner membrane. It carries out the reaction 4 Fe(II)-[cytochrome c] + O2 + 8 H(+)(in) = 4 Fe(III)-[cytochrome c] + 2 H2O + 4 H(+)(out). Functionally, component of the cytochrome c oxidase, the last enzyme in the mitochondrial electron transport chain which drives oxidative phosphorylation. The respiratory chain contains 3 multisubunit complexes succinate dehydrogenase (complex II, CII), ubiquinol-cytochrome c oxidoreductase (cytochrome b-c1 complex, complex III, CIII) and cytochrome c oxidase (complex IV, CIV), that cooperate to transfer electrons derived from NADH and succinate to molecular oxygen, creating an electrochemical gradient over the inner membrane that drives transmembrane transport and the ATP synthase. Cytochrome c oxidase is the component of the respiratory chain that catalyzes the reduction of oxygen to water. Electrons originating from reduced cytochrome c in the intermembrane space (IMS) are transferred via the dinuclear copper A center (CU(A)) of subunit 2 and heme A of subunit 1 to the active site in subunit 1, a binuclear center (BNC) formed by heme A3 and copper B (CU(B)). The BNC reduces molecular oxygen to 2 water molecules using 4 electrons from cytochrome c in the IMS and 4 protons from the mitochondrial matrix. The chain is Cytochrome c oxidase subunit 3 (COIII) from Metridium senile (Brown sea anemone).